A 346-amino-acid chain; its full sequence is Dihydroorotase (346 aa).

Residues His14 and His16 each contribute to the Zn(2+) site. Residues 16-18 (HLR) and Asn42 each bind substrate. The Zn(2+) site is built by Lys100, His137, and His175. Lys100 carries the post-translational modification N6-carboxylysine. His137 is a binding site for substrate. Leu220 contacts substrate. Position 248 (Asp248) interacts with Zn(2+). Residue Asp248 is part of the active site. Positions 252 and 264 each coordinate substrate.

This sequence belongs to the metallo-dependent hydrolases superfamily. DHOase family. Class II DHOase subfamily. Homodimer. Zn(2+) is required as a cofactor.

The catalysed reaction is (S)-dihydroorotate + H2O = N-carbamoyl-L-aspartate + H(+). Its pathway is pyrimidine metabolism; UMP biosynthesis via de novo pathway; (S)-dihydroorotate from bicarbonate: step 3/3. In terms of biological role, catalyzes the reversible cyclization of carbamoyl aspartate to dihydroorotate. The sequence is that of Dihydroorotase from Ruegeria sp. (strain TM1040) (Silicibacter sp.).